Consider the following 209-residue polypeptide: MKVFLIRHGQTDQNKRGILQGSVDTNLNETGRLQAKLLAQRLLPLDIDQIFCSSMKRCRETIAPYLELKPEVPIVYTDLIRERVYGDLEGMNVVEAKKLLNANHPDHYGEGLSHLTSRLLKFWDEYVVPLQGKKKCVIVLCHGGVINVLRTHFMEEKGFTFDKSKLESKIITFNTSITEIEVTEHGTGHIHTFGDASHLESEETGKLIA.

His8 (tele-phosphohistidine intermediate) is an active-site residue. Catalysis depends on Glu82, which acts as the Proton donor/acceptor.

The protein belongs to the phosphoglycerate mutase family. BPG-dependent PGAM subfamily.

It localises to the cytoplasm. Its subcellular location is the nucleus. The protein is Probable phosphatase C1687.21 of Schizosaccharomyces pombe (strain 972 / ATCC 24843) (Fission yeast).